The chain runs to 106 residues: MNKVKFKKGDLVKVIAGKHKGTEGPIIRVLREKSRVVIEGITNIKHVKPSQDNTEGGIQQVPASVHISNVALIDPKNKKEITKISYQIADNGKKVRIARKSKAHLA.

The protein belongs to the universal ribosomal protein uL24 family. In terms of assembly, part of the 50S ribosomal subunit.

In terms of biological role, one of two assembly initiator proteins, it binds directly to the 5'-end of the 23S rRNA, where it nucleates assembly of the 50S subunit. Its function is as follows. One of the proteins that surrounds the polypeptide exit tunnel on the outside of the subunit. This is Large ribosomal subunit protein uL24 from Spiroplasma kunkelii.